A 78-amino-acid polypeptide reads, in one-letter code: Structural DNA-binding protein p10 (78 aa).

Residues 1–24 (MPTKAGTKSTANKKTTKGSSKSGS) show a composition bias toward low complexity. The tract at residues 1 to 41 (MPTKAGTKSTANKKTTKGSSKSGSPRGHTGKTHAPPSMHSG) is disordered.

The protein belongs to the asfivirus P10 family.

The protein resides in the virion. Its function is as follows. May play a role in genome packaging through direct interaction with viral DNA. Binds to ssDNA and dsDNA with the same apparent affinity in vitro. This African swine fever virus (isolate Tick/South Africa/Pretoriuskop Pr4/1996) (ASFV) protein is Structural DNA-binding protein p10.